Consider the following 98-residue polypeptide: NADH-ubiquinone oxidoreductase chain 4L (98 aa).

3 consecutive transmembrane segments (helical) span residues 1-21, 29-49, and 61-81; these read MPYI…GMLI, SLLC…LTIL, and IILL…LVMV.

It belongs to the complex I subunit 4L family. Core subunit of respiratory chain NADH dehydrogenase (Complex I) which is composed of 45 different subunits.

The protein localises to the mitochondrion inner membrane. It carries out the reaction a ubiquinone + NADH + 5 H(+)(in) = a ubiquinol + NAD(+) + 4 H(+)(out). Functionally, core subunit of the mitochondrial membrane respiratory chain NADH dehydrogenase (Complex I) which catalyzes electron transfer from NADH through the respiratory chain, using ubiquinone as an electron acceptor. Part of the enzyme membrane arm which is embedded in the lipid bilayer and involved in proton translocation. In Cephalopachus bancanus (Western tarsier), this protein is NADH-ubiquinone oxidoreductase chain 4L (MT-ND4L).